The sequence spans 235 residues: Purine nucleoside phosphorylase DeoD-type (235 aa).

His4 lines the a purine D-ribonucleoside pocket. Residues Gly20, Arg24, Arg43, and 87–90 contribute to the phosphate site; that span reads RVGT. A purine D-ribonucleoside contacts are provided by residues 179–181 and 203–204; these read EME and SD. Asp204 acts as the Proton donor in catalysis.

It belongs to the PNP/UDP phosphorylase family. As to quaternary structure, homohexamer; trimer of homodimers.

It catalyses the reaction a purine D-ribonucleoside + phosphate = a purine nucleobase + alpha-D-ribose 1-phosphate. The enzyme catalyses a purine 2'-deoxy-D-ribonucleoside + phosphate = a purine nucleobase + 2-deoxy-alpha-D-ribose 1-phosphate. Its function is as follows. Catalyzes the reversible phosphorolytic breakdown of the N-glycosidic bond in the beta-(deoxy)ribonucleoside molecules, with the formation of the corresponding free purine bases and pentose-1-phosphate. The protein is Purine nucleoside phosphorylase DeoD-type of Exiguobacterium sibiricum (strain DSM 17290 / CCUG 55495 / CIP 109462 / JCM 13490 / 255-15).